The chain runs to 308 residues: MFALILFVSLACANEVAFKQWAATHNKVFANRAEYLYRFAVFLDNKKFVEANANTELNVFADMTHEEFIQTHLGMTYEVPETTSNVKAAVKAAPESVDWRSIMNPAKDQGQCGSCWTFCTTAVLEGRVNKDLGKLYSFSEQQLVDCDASDNGCEGGHPSNSLKFIQENNGLGLESDYPYKAVAGTCKKVKNVATVTGSRRVTDGSETGLQTIIAENGPVAVGMDASRPSFQLYKKGTIYSDTKCRSRMMNHCVTAVGYGSNSNGKYWIIRNSWGTSWGDAGYFLLARDSNNMCGIGRDSNYPTGVKLI.

The N-terminal stretch at 1–13 is a signal peptide; that stretch reads MFALILFVSLACA. The propeptide at 14 to 92 is activation peptide; sequence NEVAFKQWAA…TSNVKAAVKA (79 aa). Disulfide bonds link Cys-112–Cys-153 and Cys-146–Cys-186. Residue Cys-115 is part of the active site. Residues His-251 and Asn-271 contribute to the active site.

It belongs to the peptidase C1 family.

It localises to the cytoplasm. The protein localises to the cytoplasmic vesicle. The protein resides in the phagosome. It catalyses the reaction Hydrolysis of proteins, including basement membrane collagen and azocasein. Preferential cleavage: Arg-Arg-|-Xaa in small molecule substrates including Z-Arg-Arg-|-NHMec.. In terms of biological role, cysteine protease which may be involved in pathogenicity. This Entamoeba histolytica (strain ATCC 30459 / HM-1:IMSS / ABRM) protein is Cysteine proteinase 3.